Here is a 287-residue protein sequence, read N- to C-terminus: Phosphatidylinositol transfer protein 5 (287 aa).

The tract at residues 252 to 287 (FHNNNNNNSNNSNNNNNNNTQPQRSSFFSRSTDGNK) is disordered. Residues 254 to 270 (NNNNNNSNNSNNNNNNN) show a composition bias toward low complexity. Polar residues predominate over residues 271–287 (TQPQRSSFFSRSTDGNK).

Belongs to the PtdIns transfer protein family. PI transfer class IIA subfamily.

Phosphatidylinositol transfer proteins mediate the monomeric transport of lipids by shielding a lipid from the aqueous environment and binding the lipid in a hydrophobic cavity. The protein is Phosphatidylinositol transfer protein 5 (pitE) of Dictyostelium discoideum (Social amoeba).